The primary structure comprises 316 residues: Methionyl-tRNA formyltransferase (316 aa).

Residue 110 to 113 coordinates (6S)-5,6,7,8-tetrahydrofolate; that stretch reads SLLP.

Belongs to the Fmt family.

It catalyses the reaction L-methionyl-tRNA(fMet) + (6R)-10-formyltetrahydrofolate = N-formyl-L-methionyl-tRNA(fMet) + (6S)-5,6,7,8-tetrahydrofolate + H(+). In terms of biological role, attaches a formyl group to the free amino group of methionyl-tRNA(fMet). The formyl group appears to play a dual role in the initiator identity of N-formylmethionyl-tRNA by promoting its recognition by IF2 and preventing the misappropriation of this tRNA by the elongation apparatus. This chain is Methionyl-tRNA formyltransferase, found in Halothermothrix orenii (strain H 168 / OCM 544 / DSM 9562).